The chain runs to 417 residues: Serine hydroxymethyltransferase (417 aa).

Residues L122 and 126–128 each bind (6S)-5,6,7,8-tetrahydrofolate; that span reads GHL. K230 is subject to N6-(pyridoxal phosphate)lysine. Position 355–357 (355–357) interacts with (6S)-5,6,7,8-tetrahydrofolate; it reads SPF.

This sequence belongs to the SHMT family. Homodimer. Pyridoxal 5'-phosphate is required as a cofactor.

The protein resides in the cytoplasm. It catalyses the reaction (6R)-5,10-methylene-5,6,7,8-tetrahydrofolate + glycine + H2O = (6S)-5,6,7,8-tetrahydrofolate + L-serine. It participates in one-carbon metabolism; tetrahydrofolate interconversion. The protein operates within amino-acid biosynthesis; glycine biosynthesis; glycine from L-serine: step 1/1. In terms of biological role, catalyzes the reversible interconversion of serine and glycine with tetrahydrofolate (THF) serving as the one-carbon carrier. This reaction serves as the major source of one-carbon groups required for the biosynthesis of purines, thymidylate, methionine, and other important biomolecules. Also exhibits THF-independent aldolase activity toward beta-hydroxyamino acids, producing glycine and aldehydes, via a retro-aldol mechanism. The protein is Serine hydroxymethyltransferase of Francisella tularensis subsp. tularensis (strain FSC 198).